The sequence spans 262 residues: tRNA pseudouridine synthase A (262 aa).

The active-site Nucleophile is the D51. Y109 lines the substrate pocket.

The protein belongs to the tRNA pseudouridine synthase TruA family. As to quaternary structure, homodimer.

The catalysed reaction is uridine(38/39/40) in tRNA = pseudouridine(38/39/40) in tRNA. Functionally, formation of pseudouridine at positions 38, 39 and 40 in the anticodon stem and loop of transfer RNAs. This is tRNA pseudouridine synthase A from Actinobacillus pleuropneumoniae serotype 3 (strain JL03).